Consider the following 188-residue polypeptide: Dual specificity protein phosphatase 18 (188 aa).

The region spanning 19–160 is the Tyrosine-protein phosphatase domain; it reads GLSQITKSLY…LIHYEFQLFG (142 aa). The tract at residues 95–141 is sufficient for mitochondrial localization; sequence MKQGRTLLHCAAGVSRSAALCLAYLMKYHAMSLLDAHTWTKSCRPII. C104 serves as the catalytic Phosphocysteine intermediate.

The protein belongs to the protein-tyrosine phosphatase family. Non-receptor class dual specificity subfamily.

It localises to the cytoplasm. It is found in the nucleus. The protein resides in the mitochondrion inner membrane. It carries out the reaction O-phospho-L-tyrosyl-[protein] + H2O = L-tyrosyl-[protein] + phosphate. The catalysed reaction is O-phospho-L-seryl-[protein] + H2O = L-seryl-[protein] + phosphate. It catalyses the reaction O-phospho-L-threonyl-[protein] + H2O = L-threonyl-[protein] + phosphate. Can dephosphorylate single and diphosphorylated synthetic MAPK peptides, with preference for the phosphotyrosine and diphosphorylated forms over phosphothreonine. In vitro, dephosphorylates p-nitrophenyl phosphate (pNPP). The protein is Dual specificity protein phosphatase 18 (DUSP18) of Pongo abelii (Sumatran orangutan).